Here is a 551-residue protein sequence, read N- to C-terminus: Arginine--tRNA ligase (551 aa).

The 'HIGH' region signature appears at 123–133 (ANPTGPLTIGR).

This sequence belongs to the class-I aminoacyl-tRNA synthetase family. Monomer.

It localises to the cytoplasm. The enzyme catalyses tRNA(Arg) + L-arginine + ATP = L-arginyl-tRNA(Arg) + AMP + diphosphate. The sequence is that of Arginine--tRNA ligase from Chlorobium limicola (strain DSM 245 / NBRC 103803 / 6330).